The following is a 231-amino-acid chain: LexA repressor (231 aa).

The segment at residues 26–46 is a DNA-binding region (H-T-H motif); the sequence is FDEMKDALDLRSKSGIHRLIT. Residues S152 and K190 each act as for autocatalytic cleavage activity in the active site.

This sequence belongs to the peptidase S24 family. Homodimer.

It catalyses the reaction Hydrolysis of Ala-|-Gly bond in repressor LexA.. In terms of biological role, represses a number of genes involved in the response to DNA damage (SOS response), including recA and lexA. In the presence of single-stranded DNA, RecA interacts with LexA causing an autocatalytic cleavage which disrupts the DNA-binding part of LexA, leading to derepression of the SOS regulon and eventually DNA repair. In Dinoroseobacter shibae (strain DSM 16493 / NCIMB 14021 / DFL 12), this protein is LexA repressor.